Consider the following 216-residue polypeptide: NKG2-D type II integral membrane protein (216 aa).

The Cytoplasmic segment spans residues 1 to 51 (MGWIRGRRPRHNLEMSEFHNYKLGLAKSDFSTRCQKQRCPVIKSKCRENAS). Residues 52–72 (PLFFCCFIAVAMGIRFIIMVT) form a helical; Signal-anchor for type II membrane protein membrane-spanning segment. The Extracellular segment spans residues 73 to 216 (IWSAVFLNSL…NTYICMQRTV (144 aa)). 2 disulfide bridges follow: Cys-96-Cys-105 and Cys-99-Cys-110. Positions 98 to 213 (PCPKNWICYK…SIPNTYICMQ (116 aa)) constitute a C-type lectin domain. 4 N-linked (GlcNAc...) asparagine glycosylation sites follow: Asn-115, Asn-131, Asn-163, and Asn-202. Intrachain disulfides connect Cys-127-Cys-211 and Cys-189-Cys-203.

As to quaternary structure, homodimer; disulfide-linked. Heterohexamer composed of two subunits of KLRK1 and four subunits of HCST/DAP10. Interacts (via transmembrane domain) with HCST/DAP10 (via transmembrane domain); the interaction is required for KLRK1 NK cell surface and induces NK cell-mediated cytotoxicity. Can form disulfide-bonded heterodimer with CD94. Interacts with CEACAM1; recruits PTPN6 that dephosphorylates VAV1. In terms of tissue distribution, natural killer cells.

The protein localises to the cell membrane. Functions as an activating and costimulatory receptor involved in immunosurveillance upon binding to various cellular stress-inducible ligands displayed at the surface of autologous tumor cells and virus-infected cells. Provides both stimulatory and costimulatory innate immune responses on activated killer (NK) cells, leading to cytotoxic activity. Acts as a costimulatory receptor for T-cell receptor (TCR) in CD8(+) T-cell-mediated adaptive immune responses by amplifying T-cell activation. Stimulates perforin-mediated elimination of ligand-expressing tumor cells. Signaling involves calcium influx, culminating in the expression of TNF-alpha. Participates in NK cell-mediated bone marrow graft rejection. May play a regulatory role in differentiation and survival of NK cells. Binds to ligands belonging to various subfamilies of MHC class I-related glycoproteins. In Macaca fascicularis (Crab-eating macaque), this protein is NKG2-D type II integral membrane protein (KLRK1).